The chain runs to 253 residues: Triosephosphate isomerase (253 aa).

13 to 15 lines the substrate pocket; sequence NWK. Residue histidine 100 is the Electrophile of the active site. Catalysis depends on glutamate 169, which acts as the Proton acceptor. Substrate is bound by residues glycine 175, serine 208, and 229–230; that span reads GG.

It belongs to the triosephosphate isomerase family. Homodimer.

Its subcellular location is the cytoplasm. It carries out the reaction D-glyceraldehyde 3-phosphate = dihydroxyacetone phosphate. The protein operates within carbohydrate biosynthesis; gluconeogenesis. It functions in the pathway carbohydrate degradation; glycolysis; D-glyceraldehyde 3-phosphate from glycerone phosphate: step 1/1. In terms of biological role, involved in the gluconeogenesis. Catalyzes stereospecifically the conversion of dihydroxyacetone phosphate (DHAP) to D-glyceraldehyde-3-phosphate (G3P). The protein is Triosephosphate isomerase of Synechococcus sp. (strain RCC307).